The chain runs to 1755 residues: Transposon Ty1-GR3 Gag-Pol polyprotein (1755 aa).

Polar residues-rich tracts occupy residues 1–10 (MESQQLSNYP), 48–60 (TKANSQQTTTPAS), and 127–152 (QSQFPQYPSSVGTPLSTPSPESGNTF). Disordered regions lie at residues 1 to 93 (MESQ…MMTQ), 126 to 173 (PQSQ…RPPP), and 352 to 421 (GSRN…SKST). Positions 153–165 (TDSSSADSDMTST) are enriched in low complexity. The tract at residues 299–401 (NNGIHINNKV…NSKSKTARAH (103 aa)) is RNA-binding. Over residues 402-418 (NVSTSNNSPSTDNDSIS) the composition is skewed to low complexity. Serine 416 bears the Phosphoserine mark. Aspartate 461 functions as the For protease activity; shared with dimeric partner in the catalytic mechanism. The interval 583–640 (NVHTSESTRKYPYPFIHRMLAHANAQTIRYSLKNNTITYFNESDVDWSSAIDYQCPDC) is integrase-type zinc finger-like. One can recognise an Integrase catalytic domain in the interval 660–835 (NSYEPFQYLH…AGLDISTLLP (176 aa)). Positions 671 and 736 each coordinate Mg(2+). The disordered stretch occupies residues 956–1172 (SKAVSPTDST…LGGIGDSNAY (217 aa)). Over residues 960 to 969 (SPTDSTPPST) the composition is skewed to low complexity. Composition is skewed to polar residues over residues 1005–1015 (STPQISNIEST) and 1031–1043 (MSQSNTHESSYAS). The segment covering 1044-1053 (KSKDFRHSDS) has biased composition (basic and acidic residues). Composition is skewed to polar residues over residues 1054-1082 (YSDNETNHTNVPISSTGGTNNKTVPQTSE) and 1095-1106 (SIDTSSSESNSL). The Bipartite nuclear localization signal motif lies at 1178–1212 (KKRSLEDNETEIKVSRDTWNTKNMRSLEPPRSKKR). A Reverse transcriptase Ty1/copia-type domain is found at 1338–1476 (NNYYITQLDI…DILGLEIKYQ (139 aa)). Aspartate 1346, aspartate 1427, aspartate 1428, aspartate 1610, glutamate 1652, and aspartate 1685 together coordinate Mg(2+). The region spanning 1610 to 1752 (DASYGNQPYY…IKTFKLLTNK (143 aa)) is the RNase H Ty1/copia-type domain.

The capsid protein forms a homotrimer, from which the VLPs are assembled. The protease is a homodimer, whose active site consists of two apposed aspartic acid residues. In terms of processing, initially, virus-like particles (VLPs) are composed of the structural unprocessed proteins Gag and Gag-Pol, and also contain the host initiator methionine tRNA (tRNA(i)-Met) which serves as a primer for minus-strand DNA synthesis, and a dimer of genomic Ty RNA. Processing of the polyproteins occurs within the particle and proceeds by an ordered pathway, called maturation. First, the protease (PR) is released by autocatalytic cleavage of the Gag-Pol polyprotein yielding capsid protein p45 and a Pol-p154 precursor protein. This cleavage is a prerequisite for subsequent processing of Pol-p154 at the remaining sites to release the mature structural and catalytic proteins. Maturation takes place prior to the RT reaction and is required to produce transposition-competent VLPs.

It is found in the cytoplasm. The protein localises to the nucleus. It carries out the reaction DNA(n) + a 2'-deoxyribonucleoside 5'-triphosphate = DNA(n+1) + diphosphate. The enzyme catalyses Endonucleolytic cleavage to 5'-phosphomonoester.. In terms of biological role, capsid protein (CA) is the structural component of the virus-like particle (VLP), forming the shell that encapsulates the retrotransposons dimeric RNA genome. The particles are assembled from trimer-clustered units and there are holes in the capsid shells that allow for the diffusion of macromolecules. CA also has nucleocapsid-like chaperone activity, promoting primer tRNA(i)-Met annealing to the multipartite primer-binding site (PBS), dimerization of Ty1 RNA and initiation of reverse transcription. Its function is as follows. The aspartyl protease (PR) mediates the proteolytic cleavages of the Gag and Gag-Pol polyproteins after assembly of the VLP. Functionally, reverse transcriptase/ribonuclease H (RT) is a multifunctional enzyme that catalyzes the conversion of the retro-elements RNA genome into dsDNA within the VLP. The enzyme displays a DNA polymerase activity that can copy either DNA or RNA templates, and a ribonuclease H (RNase H) activity that cleaves the RNA strand of RNA-DNA heteroduplexes during plus-strand synthesis and hydrolyzes RNA primers. The conversion leads to a linear dsDNA copy of the retrotransposon that includes long terminal repeats (LTRs) at both ends. Integrase (IN) targets the VLP to the nucleus, where a subparticle preintegration complex (PIC) containing at least integrase and the newly synthesized dsDNA copy of the retrotransposon must transit the nuclear membrane. Once in the nucleus, integrase performs the integration of the dsDNA into the host genome. The chain is Transposon Ty1-GR3 Gag-Pol polyprotein (TY1B-GR3) from Saccharomyces cerevisiae (strain ATCC 204508 / S288c) (Baker's yeast).